Reading from the N-terminus, the 61-residue chain is UPF0391 membrane protein Pnap_0032 (61 aa).

2 helical membrane passes run 5 to 25 and 33 to 53; these read AIIF…GVAA and VLFG…ALGV.

The protein belongs to the UPF0391 family.

It is found in the cell membrane. This is UPF0391 membrane protein Pnap_0032 from Polaromonas naphthalenivorans (strain CJ2).